Here is an 88-residue protein sequence, read N- to C-terminus: UPF0223 protein YktA (88 aa).

The protein belongs to the UPF0223 family.

This Bacillus subtilis (strain 168) protein is UPF0223 protein YktA (yktA).